The following is a 75-amino-acid chain: UPF0270 protein Avin_35000 (75 aa).

Belongs to the UPF0270 family.

The chain is UPF0270 protein Avin_35000 from Azotobacter vinelandii (strain DJ / ATCC BAA-1303).